We begin with the raw amino-acid sequence, 279 residues long: Urease accessory protein UreD (279 aa).

The protein belongs to the UreD family. UreD, UreF and UreG form a complex that acts as a GTP-hydrolysis-dependent molecular chaperone, activating the urease apoprotein by helping to assemble the nickel containing metallocenter of UreC. The UreE protein probably delivers the nickel.

It is found in the cytoplasm. Functionally, required for maturation of urease via the functional incorporation of the urease nickel metallocenter. The sequence is that of Urease accessory protein UreD from Streptococcus salivarius (strain 57.I).